Reading from the N-terminus, the 318-residue chain is Olfactory receptor 56A1 (318 aa).

Residues 1 to 32 are Extracellular-facing; that stretch reads MIQPMASPSNSSTVPVSEFLLICFPNFQSWQH. N-linked (GlcNAc...) asparagine glycosylation is present at N10. Residues 33–53 form a helical membrane-spanning segment; sequence WLSLPLSLLFLLAMGANTTLL. The Cytoplasmic segment spans residues 54-61; sequence ITIQLEAS. The chain crosses the membrane as a helical span at residues 62-82; that stretch reads LHQPLYYLLSLLSLLDIVLCL. Topologically, residues 83-106 are extracellular; the sequence is TVIPKVLAIFWYDLRSISFPACFL. C104 and C196 are disulfide-bonded. The chain crosses the membrane as a helical span at residues 107-127; the sequence is QMFIMNSFLPMESCTFMVMAY. Over 128-146 the chain is Cytoplasmic; it reads DRYVAICHPLRYPSIITNQ. Residues 147-167 form a helical membrane-spanning segment; sequence FVAKASVFIVVRNALLTAPIP. At 168 to 203 the chain is on the extracellular side; the sequence is ILTSLLHYCGENVIENCICANLSVSRLSCDNFTLNR. N-linked (GlcNAc...) asparagine glycans are attached at residues N188 and N198. Residues 204-224 traverse the membrane as a helical segment; the sequence is IYQFVAGWTLLGSDLFLIFLS. At 225–244 the chain is on the cytoplasmic side; it reads YTFILRAVLRFKAEGAAVKA. A helical transmembrane segment spans residues 245–265; the sequence is LSTCGSHFILILFFSTILLVV. At 266-280 the chain is on the extracellular side; the sequence is VLTNVARKKVPMDIL. Residues 281–301 traverse the membrane as a helical segment; sequence ILLNVLHHLIPPALNPIVYGV. Over 302–318 the chain is Cytoplasmic; the sequence is RTKEIKQGIQKLLQRGR.

The protein belongs to the G-protein coupled receptor 1 family.

It localises to the cell membrane. Odorant receptor. This chain is Olfactory receptor 56A1 (OR56A1), found in Homo sapiens (Human).